Here is a 246-residue protein sequence, read N- to C-terminus: Transcription factor A, mitochondrial (246 aa).

The N-terminal 42 residues, 1 to 42 (MAFLRSMWGVLSALGRSGAELCTGCGSRLRSPFSFVYLPRWF), are a transit peptide targeting the mitochondrion. Positions 50-118 (PKKPVSSYLR…VYKEEISRFK (69 aa)) form a DNA-binding region, HMG box 1. 3 positions are modified to phosphoserine; by PKA: S55, S56, and S61. A Phosphothreonine modification is found at T122. The segment at residues 155 to 219 (PKRPRSAYNV…RYHNEMKSWE (65 aa)) is a DNA-binding region (HMG box 2). S160 is subject to Phosphoserine; by PKA. S193 and S195 each carry phosphoserine.

Monomer; binds DNA as a monomer. Homodimer. Component of the mitochondrial transcription initiation complex, composed at least of TFB2M, TFAM and POLRMT. In this complex TFAM recruits POLRMT to the promoter whereas TFB2M induces structural changes in POLRMT to enable promoter opening and trapping of the DNA non-template strand. Upon metabolic stress, forms a complex composed of FOXO3, SIRT3, TFAM and POLRMT. Interacts with TFB1M and TFB2M. Interacts with CLPX; this enhances DNA-binding. In terms of processing, phosphorylation by PKA within the HMG box 1 impairs DNA binding and promotes degradation by the AAA+ Lon protease.

It is found in the mitochondrion. The protein resides in the mitochondrion matrix. Its subcellular location is the mitochondrion nucleoid. Binds to the mitochondrial light strand promoter and functions in mitochondrial transcription regulation. Component of the mitochondrial transcription initiation complex, composed at least of TFB2M, TFAM and POLRMT that is required for basal transcription of mitochondrial DNA. In this complex, TFAM recruits POLRMT to a specific promoter whereas TFB2M induces structural changes in POLRMT to enable promoter opening and trapping of the DNA non-template strand. Required for accurate and efficient promoter recognition by the mitochondrial RNA polymerase. Promotes transcription initiation from the HSP1 and the light strand promoter by binding immediately upstream of transcriptional start sites. Is able to unwind DNA. Bends the mitochondrial light strand promoter DNA into a U-turn shape via its HMG boxes. Required for maintenance of normal levels of mitochondrial DNA. May play a role in organizing and compacting mitochondrial DNA. The polypeptide is Transcription factor A, mitochondrial (Homo sapiens (Human)).